We begin with the raw amino-acid sequence, 62 residues long: MIIAFQLAVFALIATSSILLISVPVVFASPDGWSNNKNVVFSGTSLWIGLVFLVAILNSLIS.

A run of 2 helical transmembrane segments spans residues 8–28 and 41–61; these read AVFA…VVFA and FSGT…NSLI.

It belongs to the PsbZ family. In terms of assembly, PSII is composed of 1 copy each of membrane proteins PsbA, PsbB, PsbC, PsbD, PsbE, PsbF, PsbH, PsbI, PsbJ, PsbK, PsbL, PsbM, PsbT, PsbY, PsbZ, Psb30/Ycf12, at least 3 peripheral proteins of the oxygen-evolving complex and a large number of cofactors. It forms dimeric complexes.

The protein localises to the plastid. The protein resides in the chloroplast thylakoid membrane. In terms of biological role, may control the interaction of photosystem II (PSII) cores with the light-harvesting antenna, regulates electron flow through the 2 photosystem reaction centers. PSII is a light-driven water plastoquinone oxidoreductase, using light energy to abstract electrons from H(2)O, generating a proton gradient subsequently used for ATP formation. In Calycanthus floridus var. glaucus (Eastern sweetshrub), this protein is Photosystem II reaction center protein Z.